A 556-amino-acid polypeptide reads, in one-letter code: Arginine--tRNA ligase (556 aa).

A 'HIGH' region motif is present at residues 132-142; that stretch reads ANPTGDLHLGH.

This sequence belongs to the class-I aminoacyl-tRNA synthetase family. In terms of assembly, monomer.

It is found in the cytoplasm. It carries out the reaction tRNA(Arg) + L-arginine + ATP = L-arginyl-tRNA(Arg) + AMP + diphosphate. This is Arginine--tRNA ligase from Listeria monocytogenes serotype 4a (strain HCC23).